We begin with the raw amino-acid sequence, 1111 residues long: RecBCD enzyme subunit RecC (1111 aa).

Belongs to the RecC family. As to quaternary structure, heterotrimer of RecB, RecC and RecD. All subunits contribute to DNA-binding.

Functionally, a helicase/nuclease that prepares dsDNA breaks (DSB) for recombinational DNA repair. Binds to DSBs and unwinds DNA via a highly rapid and processive ATP-dependent bidirectional helicase activity. Unwinds dsDNA until it encounters a Chi (crossover hotspot instigator) sequence from the 3' direction. Cuts ssDNA a few nucleotides 3' to the Chi site. The properties and activities of the enzyme are changed at Chi. The Chi-altered holoenzyme produces a long 3'-ssDNA overhang and facilitates RecA-binding to the ssDNA for homologous DNA recombination and repair. Holoenzyme degrades any linearized DNA that is unable to undergo homologous recombination. In the holoenzyme this subunit recognizes the wild-type Chi sequence, and when added to isolated RecB increases its ATP-dependent helicase processivity. In Buchnera aphidicola subsp. Baizongia pistaciae (strain Bp), this protein is RecBCD enzyme subunit RecC.